The primary structure comprises 385 residues: GDP-mannose-dependent alpha-(1-6)-phosphatidylinositol monomannoside mannosyltransferase (385 aa).

Residues Arg205, Lys210, Val262, and Glu299 each contribute to the GDP-alpha-D-mannose site.

This sequence belongs to the glycosyltransferase group 1 family. Glycosyltransferase 4 subfamily.

The enzyme catalyses a 1,2-diacyl-sn-glycero-3-phospho-[alpha-D-mannopyranosyl-(1&lt;-&gt;6)-D-myo-inositol] + GDP-alpha-D-mannose = a 2,6-O-bis(alpha-D-mannopyranosyl)-1-phosphatidyl-1D-myo-inositol + GDP + H(+). The catalysed reaction is a 1,2-diacyl-sn-glycero-3-phospho-[alpha-D-6-acyl-mannopyranosyl-(1&lt;-&gt;6)-D-myo-inositol] + GDP-alpha-D-mannose = a 2-O-(alpha-D-mannosyl)-6-O-(6-O-acyl-alpha-D-mannosyl)-1-phosphatidyl-1D-myo-inositol + GDP + H(+). It functions in the pathway phospholipid metabolism; phosphatidylinositol metabolism. Involved in the biosynthesis of phosphatidyl-myo-inositol mannosides (PIM) which are early precursors in the biosynthesis of lipomannans (LM) and lipoarabinomannans (LAM). Catalyzes the addition of a mannosyl residue from GDP-D-mannose (GDP-Man) to the position 6 of a phosphatidyl-myo-inositol bearing an alpha-1,2-linked mannose residue (PIM1) to generate phosphatidyl-myo-inositol bearing alpha-1,2- and alpha-1,6-linked mannose residues (Ac1PIM2). PimB also catalyzes the addition of a mannosyl residue from GDP-Man to the position 6 of phosphatidyl-myo-inositol bearing an acylated alpha-1,2-linked mannose residue (Ac1PIM1) to generate monoacylated phosphatidyl-myo-inositol bearing alpha-1,2- and alpha-1,6-linked mannose residues (Ac1PIM2). The addition of the second mannosyl residue by PimB preferentially occurs before the acylation of the mannosyl residue transferred by PimA. Also able to transfer a mannosyl residue from GDP-Man to the position 6 of a phosphatidyl-myo-inositol (PI), but this reaction is very slow. In Mycobacterium tuberculosis (strain CDC 1551 / Oshkosh), this protein is GDP-mannose-dependent alpha-(1-6)-phosphatidylinositol monomannoside mannosyltransferase.